Reading from the N-terminus, the 1328-residue chain is ATP-dependent DNA helicase hus2/rqh1 (1328 aa).

Composition is skewed to low complexity over residues 217 to 236 (NNLP…NDNN) and 244 to 254 (ASPTPSSVSSQ). The tract at residues 217 to 254 (NNLPFPRLNNNNTNNNNDNNAIEKRDSASPTPSSVSSQ) is disordered. The Helicase ATP-binding domain occupies 528–707 (INGTLSGKDV…INTLRMENCL (180 aa)). 555–562 (AVIEGGAS) serves as a coordination point for ATP. Positions 651 to 654 (DEAH) match the DEAH box motif. In terms of domain architecture, Helicase C-terminal spans 728–876 (LYTELYRFIS…ETKERQRQML (149 aa)). One can recognise an HRDC domain in the interval 1115-1195 (IDVMTRCLKD…QKFIDEKEQN (81 aa)). 2 disordered regions span residues 1224–1247 (EQGF…GDEE) and 1260–1328 (NSQS…QNYR). Over residues 1260-1269 (NSQSLTQTGS) the composition is skewed to polar residues. The span at 1283-1300 (KSYRHKRGSTSYSRKRKY) shows a compositional bias: basic residues.

The protein belongs to the helicase family. RecQ subfamily. In terms of assembly, interacts with top3.

It is found in the nucleus. The enzyme catalyses Couples ATP hydrolysis with the unwinding of duplex DNA by translocating in the 3'-5' direction.. It catalyses the reaction ATP + H2O = ADP + phosphate + H(+). Functionally, ATP-dependent 3'-5' DNA-helicase. Has a role in the repair of UV-induced DNA damage in G2 via recombination-mediated repair. Also has a role in the repair of infrared-induced double DNA strand breaks. This chain is ATP-dependent DNA helicase hus2/rqh1, found in Schizosaccharomyces pombe (strain 972 / ATCC 24843) (Fission yeast).